The following is an 89-amino-acid chain: Small ribosomal subunit protein uS15 (89 aa).

Over residues 1–21 the composition is skewed to basic and acidic residues; that stretch reads MSITAERKAEVIKDNARDKGD. A disordered region spans residues 1–26; sequence MSITAERKAEVIKDNARDKGDTGSPE.

It belongs to the universal ribosomal protein uS15 family. In terms of assembly, part of the 30S ribosomal subunit. Forms a bridge to the 50S subunit in the 70S ribosome, contacting the 23S rRNA.

Its function is as follows. One of the primary rRNA binding proteins, it binds directly to 16S rRNA where it helps nucleate assembly of the platform of the 30S subunit by binding and bridging several RNA helices of the 16S rRNA. Functionally, forms an intersubunit bridge (bridge B4) with the 23S rRNA of the 50S subunit in the ribosome. The polypeptide is Small ribosomal subunit protein uS15 (Sphingopyxis alaskensis (strain DSM 13593 / LMG 18877 / RB2256) (Sphingomonas alaskensis)).